Here is a 102-residue protein sequence, read N- to C-terminus: Protein E7 (102 aa).

Positions Met1–Thr36 are E7 terminal domain. A zinc finger lies at Cys61–Cys97. Residues Ile79–Thr87 carry the Nuclear export signal motif.

The protein belongs to the papillomaviridae E7 protein family. In terms of assembly, homodimer. Homooligomer. Interacts with host RB1; this interaction induces dissociation of RB1-E2F1 complex thereby disrupting RB1 activity. Interacts with host EP300; this interaction represses EP300 transcriptional activity. Interacts with protein E2; this interaction inhibits E7 oncogenic activity. Interacts with host TMEM173/STING; this interaction impairs the ability of TMEM173/STING to sense cytosolic DNA and promote the production of type I interferon (IFN-alpha and IFN-beta). In terms of processing, highly phosphorylated.

It localises to the host cytoplasm. The protein localises to the host nucleus. Its function is as follows. Plays a role in viral genome replication by driving entry of quiescent cells into the cell cycle. Stimulation of progression from G1 to S phase allows the virus to efficiently use the cellular DNA replicating machinery to achieve viral genome replication. E7 protein has both transforming and trans-activating activities. Induces the disassembly of the E2F1 transcription factor from RB1, with subsequent transcriptional activation of E2F1-regulated S-phase genes. Interferes with host histone deacetylation mediated by HDAC1 and HDAC2, leading to transcription activation. Also plays a role in the inhibition of both antiviral and antiproliferative functions of host interferon alpha. Interaction with host TMEM173/STING impairs the ability of TMEM173/STING to sense cytosolic DNA and promote the production of type I interferon (IFN-alpha and IFN-beta). This Odocoileus virginianus (White-tailed deer) protein is Protein E7.